Reading from the N-terminus, the 1361-residue chain is MNVYDDVIDPTVVSHSVCGHFTTTDYLELIVIRTDVLSIYKPIRSGRLYLMEEHKLSGRINDVALIPKHSNGSNGNGINLSYLLLSTGVAKLSLLMYNNMTSSIETISLHFYEDKFESATMLDLARNSQLRIEPNGNYAMLFNNDVLAILPFYTGINEDEDEDYINNDKSKINDNSKKSLFKRKKGKTQNNKVTHPSIIINCSELGPQIKNIKDIQFLCGFTKSTIGVLYQPQLAWCGNSQLVPLPTNYAIISLDMKFSIDATTFDKAIISEISQLPSDWHTIAPTLSGSLILGVNEIAFLDNTGVLQSILTLNSYSDKVLPKVRVIDKSSHEVFFNTGSKFALIPSNENERSVENILLFDENGCIFNVDLKSEGRLLTQFNITKLPLGEDVLSQKSNPSSVSIIWADGRLDTYTIFIGFQSGDATMLKLNHLHSAIEVEEPTFMKDYVNKQASAAYNNEDDDDDDDDFNLYSDEENDQVNNKNDRTFGTNESNEPFTAQELMELRNIGPINSMCVGKVSSIEDNVKGLPNPNKQEISIVCTSGYGDGSHLNAILASVQPRVEKALKFISITKIWNLHIKGKDKFLITTDSTQSQSNIYEIDNNFSQHKQGRLRRDATTIHIATIGDNKRIVQVTTNHLYLYDLTFRRFSTIKFDYEVVHVSVMDPYVLITLSRGDIKVFELENRNKKKFVKVPLPEILTEMVITSGLILKSNMCNEFLSGIGKSTIEQLLFTFVTADNQIIFFTKDHNDRIFQLNGIDQLQDSLYISTYQLPDEIIPDPSIKQIMINKLGNNSKDEYLTILTFGGEIYQYKKSRSRHSRFYRNVGRNDHPITGAPDNAYPKGVSGIERIMHYIPNFDGYSVIFVTGNTPYIIMKEDDSLPRIFPFGNIPIVSMSRWGEGSVICIDDIKNARIYSLNQDNIYYGNKLPIRKIKIGSMLQNYKTLNSIVYHERTQLYLVSYTKEISYEAKAEDGSLLIGYKPELPNAKAFKSGVLLINPKSWEVIDELDLPDNSLVNDMKSSFIQIDTRTKRKREYIIVGIGYATMEDVPPTGEFHIYDITEVVPEPGKPNTNFKLKEIFKEDIRGIVSVVNGISGRFLISQSQKIMVRDVQQDNSVIPVAFLDVPVFVTSLKTFGNLIVIGDAMQGIQFVGFDAEPYRMITLGSSITKFEVISVEFLVNNGDIYFLVTDRDSIMHVLKYAPDQPNTLSGQRLVHCSSFNLHSLNNCTMLLPKNDEFPRDQRYSRSFQTITAQVDGSISKIVPVKEETYRRLYFIQQQIIDKEPQLAGLNPRMERQDNKYYHLGHSLRPMLDFNIIKRFKDMSMNRRSHIVQKLGKNSNLEVWRDLIDLEFSLRSLKPTDQN.

Residues 455-493 (AAYNNEDDDDDDDDFNLYSDEENDQVNNKNDRTFGTNES) are disordered. Over residues 459 to 478 (NEDDDDDDDDFNLYSDEEND) the composition is skewed to acidic residues. Residues 479 to 493 (QVNNKNDRTFGTNES) show a composition bias toward polar residues.

This sequence belongs to the CFT1 family.

It localises to the nucleus. RNA-binding component of the cleavage and polyadenylation factor (CPF) complex, which plays a key role in polyadenylation-dependent pre-mRNA 3'-end formation and cooperates with cleavage factors including the CFIA complex and NAB4/CFIB. Involved in poly(A) site recognition. May be involved in coupling transcription termination and mRNA 3'-end formation. The protein is Protein CFT1 (CFT1) of Candida glabrata (strain ATCC 2001 / BCRC 20586 / JCM 3761 / NBRC 0622 / NRRL Y-65 / CBS 138) (Yeast).